The following is an 87-amino-acid chain: Putative defensin-like protein 231 (87 aa).

Residues 1-26 form the signal peptide; it reads MKFATCFLVSYVLVFLVLSVCKEVEA. 4 disulfides stabilise this stretch: cysteine 30-cysteine 85, cysteine 40-cysteine 66, cysteine 48-cysteine 79, and cysteine 64-cysteine 81.

The protein belongs to the DEFL family.

The protein localises to the secreted. The chain is Putative defensin-like protein 231 (SCRL25) from Arabidopsis thaliana (Mouse-ear cress).